A 504-amino-acid chain; its full sequence is Pentatricopeptide repeat-containing protein At1g05600 (504 aa).

PPR repeat units lie at residues 45-79 (NGSVYATMIDILGKSNRVLEMKYVIERMKEDSCEC), 80-114 (KDSVFASVIRTFSRAGRLEDAISLFKSLHEFNCVN), 115-145 (WSLSFDTLLQEMVKESELEAACHIFRKYCYG), 151-185 (RITALNLLMKVLCQVNRSDLASQVFQEMNYQGCYP), 186-216 (DRDSYRILMKGFCLEGKLEEATHLLYSMFWR), 225-259 (DIVVYRILLDALCDAGEVDDAIEILGKILRKGLKA), 260-296 (PKRCYHHIEAGHWESSSEGIERVKRLLTETLIRGAIP), 297-331 (CLDSYSAMATDLFEEGKLVEGEEVLLAMRSKGFEP), 332-367 (TPFIYGAKVKALCRAGKLKEAVSVINKEMMQGHCLP), 368-398 (TVGVYNVLIKGLCDDGKSMEAVGYLKKMSKQ), 404-438 (NEETYQTLVDGLCRDGQFLEASQVMEEMLIKSHFP), and 439-473 (GVETYHMMIKGLCDMDRRYEAVMWLEEMVSQDMVP).

Belongs to the PPR family. P subfamily.

The chain is Pentatricopeptide repeat-containing protein At1g05600 from Arabidopsis thaliana (Mouse-ear cress).